The sequence spans 515 residues: Anterior pharynx in excess protein 1 (515 aa).

The signal sequence occupies residues 1 to 26; it reads MTNFSSLLTTIFLCIISSATGSGTIE. The Extracellular segment spans residues 27 to 392; the sequence is LLISSPQTVL…QASDELQLRL (366 aa). A glycan (N-linked (GlcNAc...) asparagine) is linked at Asn123. The DSL domain occupies 130–172; that stretch reads NLCSSNYHGKRCNRYCIANAKLHWECSTHGVRRCSAGWSGEDC. Cystine bridges form between Cys132-Cys141, Cys145-Cys155, Cys163-Cys172, Cys177-Cys187, Cys181-Cys193, Cys195-Cys204, Cys213-Cys218, Cys228-Cys237, Cys244-Cys256, Cys250-Cys268, Cys270-Cys279, Cys288-Cys300, Cys294-Cys310, and Cys312-Cys321. EGF-like domains lie at 173–205, 203–238, 240–280, and 284–322; these read SNPI…TRCE, RCEQ…DRCD, DIKI…SQCK, and SKVR…KFCE. Asn200 carries N-linked (GlcNAc...) asparagine glycosylation. Positions 325-349 constitute an EGF-like 5; incomplete domain; that stretch reads NHGDCSAMRCSAGETCQISGDFAIC. A helical membrane pass occupies residues 393-413; sequence IAAICVLFSVCVIGLALVSFF. At 414–515 the chain is on the cytoplasmic side; it reads FYMHSFSKWK…AADDESSFRV (102 aa). 2 disordered regions span residues 427–452 and 466–494; these read SQQA…SGTG and RGNA…PPAY. Positions 431–452 are enriched in low complexity; the sequence is GGSTILPTTTSIPMSTTSSGTG.

It localises to the cell membrane. The protein resides in the nucleus. The protein localises to the cytoplasm. Functionally, probable ligand for lin-12/Notch and glp-1/Notch receptors and involved in the mediation of Notch signaling. Involved in the lin-12/Notch pathway signaling of cell fate in vulval precursor cells (VPCs), acting redundantly with dsl-1 and lag-2. Contributes to the establishment of the dorsal-ventral axis in early embryos. Involved in the specification of the blastomere cell ABp fate, probably acting as a signal from the P2 blastomere to the glp-1/Notch receptor on ABp and ABa. Probably acts as a signal, from the secondary vulval epithelial cells and the vulval muscle type 1 (vm1) cells, to activate the lin-12/Notch pathway in type 2 vulval muscle (vm2) cells, contributing to formation of the postsynaptic muscle plasma membrane extensions, known as muscle arms. Required for oocyte growth control, acting redundantly with lag-2, perhaps signaling via the glp-1/Notch pathway. Plays a somatic role in ovulation during adulthood, perhaps via lin-12/Notch signaling. Involved in establishing left-right asymmetry during intestinal organogenesis. This chain is Anterior pharynx in excess protein 1 (apx-1), found in Caenorhabditis elegans.